The sequence spans 264 residues: Transcription initiation factor TFIID subunit 9 (264 aa).

Residue Lys-5 is modified to N6-acetyllysine. Phosphoserine occurs at positions 149, 152, 155, and 158. Residues 150–174 form a disordered region; the sequence is VGSVSSRPSTPTLGTPTPQAMSVST. Polar residues predominate over residues 151-174; the sequence is GSVSSRPSTPTLGTPTPQAMSVST. A phosphothreonine mark is found at Thr-159, Thr-161, Thr-164, and Thr-178. Phosphoserine occurs at positions 181 and 196. Positions 233 to 264 are disordered; that stretch reads QNTANESANALKRKREEEDDDDDDDDDDYDNL. The segment covering 249–264 has biased composition (acidic residues); sequence EEDDDDDDDDDDYDNL.

It belongs to the TAF9 family. Component of the TFIID basal transcription factor complex, composed of TATA-box-binding protein TBP, and a number of TBP-associated factors (TAFs), including TAF1, TAF2, TAF3, TAF4, TAF5, TAF6, TAF7, TAF8, TAF9, TAF10, TAF11, TAF12 and TAF13. Component of the TATA-binding protein-free TAF complex (TFTC), the PCAF histone acetylase complex and the STAGA transcription coactivator-HAT complex. The PCAF complex consists at least of TADA2L/ADA2, SUPT3H/SPT3, TADA3L/ADA3, TAF5L/PAF65-beta, TAF6L/PAF65-alpha, TAF10/TAFII30, TAF12/TAFII20, TAF9/TAFII31 and TRRAP. The STAGA transcription coactivator-HAT complex consists at least of SUPT3H, GCN5L2, SUPT7L, TAF5L, TAF6L, TADA3L, TAD1L, TAF10, TAF12, TRRAP and TAF9. Binds N-terminal domain of p53/TP53 which is essential for transcription. Component of some MLL1/MLL complex, at least composed of the core components KMT2A/MLL1, ASH2L, HCFC1/HCF1, WDR5 and RBBP5, as well as the facultative components BACC1, CHD8, E2F6, HSP70, INO80C, KANSL1, LAS1L, MAX, MCRS1, MGA, MYST1/MOF, PELP1, PHF20, PRP31, RING2, RUVB1/TIP49A, RUVB2/TIP49B, SENP3, TAF1, TAF4, TAF6, TAF7, TAF9 and TEX10. Binds TFIIB and the Herpes simplex virus activator VP16. Forms a heterodimer with TAF6 in a complex with the TAF4B-TAF12 heterodimer. Also interacts with TAF5. Binds directly DNA. Increased DNA binding when complexed with TAF6.

The protein resides in the nucleus. In terms of biological role, the TFIID basal transcription factor complex plays a major role in the initiation of RNA polymerase II (Pol II)-dependent transcription. TFIID recognizes and binds promoters with or without a TATA box via its subunit TBP, a TATA-box-binding protein, and promotes assembly of the pre-initiation complex (PIC). The TFIID complex consists of TBP and TBP-associated factors (TAFs), including TAF1, TAF2, TAF3, TAF4, TAF5, TAF6, TAF7, TAF8, TAF9, TAF10, TAF11, TAF12 and TAF13. TAF9 is also a component of the TBP-free TAFII complex (TFTC), the PCAF histone acetylase complex and the STAGA transcription coactivator-HAT complex. TAF9 and its paralog TAF9B are involved in transcriptional activation as well as repression of distinct but overlapping sets of genes. Essential for cell viability. May have a role in gene regulation associated with apoptosis. This chain is Transcription initiation factor TFIID subunit 9, found in Rattus norvegicus (Rat).